We begin with the raw amino-acid sequence, 56 residues long: Large ribosomal subunit protein bL33 (56 aa).

This sequence belongs to the bacterial ribosomal protein bL33 family.

This Campylobacter hominis (strain ATCC BAA-381 / DSM 21671 / CCUG 45161 / LMG 19568 / NCTC 13146 / CH001A) protein is Large ribosomal subunit protein bL33.